We begin with the raw amino-acid sequence, 243 residues long: Carboxy-S-adenosyl-L-methionine synthase (243 aa).

S-adenosyl-L-methionine-binding positions include Tyr39, 64-66 (GCS), 90-91 (DN), 118-119 (DL), Asn133, and Arg200.

The protein belongs to the class I-like SAM-binding methyltransferase superfamily. Cx-SAM synthase family. In terms of assembly, homodimer.

It catalyses the reaction prephenate + S-adenosyl-L-methionine = carboxy-S-adenosyl-L-methionine + 3-phenylpyruvate + H2O. Its function is as follows. Catalyzes the conversion of S-adenosyl-L-methionine (SAM) to carboxy-S-adenosyl-L-methionine (Cx-SAM). This is Carboxy-S-adenosyl-L-methionine synthase from Idiomarina loihiensis (strain ATCC BAA-735 / DSM 15497 / L2-TR).